The following is a 313-amino-acid chain: tRNA dimethylallyltransferase (313 aa).

An ATP-binding site is contributed by 10–17 (GPTASGKT). Position 12 to 17 (12 to 17 (TASGKT)) interacts with substrate. 3 interaction with substrate tRNA regions span residues 35–38 (DSAM), 159–163 (QRIQR), and 240–245 (RCVGYR).

Belongs to the IPP transferase family. Monomer. Mg(2+) serves as cofactor.

The catalysed reaction is adenosine(37) in tRNA + dimethylallyl diphosphate = N(6)-dimethylallyladenosine(37) in tRNA + diphosphate. Catalyzes the transfer of a dimethylallyl group onto the adenine at position 37 in tRNAs that read codons beginning with uridine, leading to the formation of N6-(dimethylallyl)adenosine (i(6)A). This Legionella pneumophila subsp. pneumophila (strain Philadelphia 1 / ATCC 33152 / DSM 7513) protein is tRNA dimethylallyltransferase.